We begin with the raw amino-acid sequence, 401 residues long: Probable aspartate/prephenate aminotransferase (401 aa).

L-aspartate is bound by residues G39, W125, and N175. K239 bears the N6-(pyridoxal phosphate)lysine mark. Residue R375 coordinates L-aspartate.

This sequence belongs to the class-I pyridoxal-phosphate-dependent aminotransferase family. As to quaternary structure, homodimer. Requires pyridoxal 5'-phosphate as cofactor.

The protein resides in the cytoplasm. The enzyme catalyses L-aspartate + 2-oxoglutarate = oxaloacetate + L-glutamate. It catalyses the reaction L-arogenate + 2-oxoglutarate = prephenate + L-glutamate. Functionally, catalyzes the reversible conversion of aspartate and 2-oxoglutarate to glutamate and oxaloacetate. Can also transaminate prephenate in the presence of glutamate. The protein is Probable aspartate/prephenate aminotransferase (aatA) of Rickettsia conorii (strain ATCC VR-613 / Malish 7).